Reading from the N-terminus, the 405-residue chain is Arginine biosynthesis bifunctional protein ArgJ (405 aa).

Residues threonine 152, lysine 178, threonine 189, glutamate 276, asparagine 400, and threonine 405 each coordinate substrate. Catalysis depends on threonine 189, which acts as the Nucleophile.

Belongs to the ArgJ family. In terms of assembly, heterotetramer of two alpha and two beta chains.

Its subcellular location is the cytoplasm. The enzyme catalyses N(2)-acetyl-L-ornithine + L-glutamate = N-acetyl-L-glutamate + L-ornithine. It carries out the reaction L-glutamate + acetyl-CoA = N-acetyl-L-glutamate + CoA + H(+). Its pathway is amino-acid biosynthesis; L-arginine biosynthesis; L-ornithine and N-acetyl-L-glutamate from L-glutamate and N(2)-acetyl-L-ornithine (cyclic): step 1/1. The protein operates within amino-acid biosynthesis; L-arginine biosynthesis; N(2)-acetyl-L-ornithine from L-glutamate: step 1/4. Functionally, catalyzes two activities which are involved in the cyclic version of arginine biosynthesis: the synthesis of N-acetylglutamate from glutamate and acetyl-CoA as the acetyl donor, and of ornithine by transacetylation between N(2)-acetylornithine and glutamate. The sequence is that of Arginine biosynthesis bifunctional protein ArgJ from Pseudomonas fluorescens (strain ATCC BAA-477 / NRRL B-23932 / Pf-5).